Consider the following 268-residue polypeptide: Thymidylate synthase (268 aa).

Arg-27 contacts dUMP. His-57 is a binding site for (6R)-5,10-methylene-5,6,7,8-tetrahydrofolate. 132 to 133 serves as a coordination point for dUMP; it reads RR. Catalysis depends on Cys-152, which acts as the Nucleophile. DUMP contacts are provided by residues 172 to 175, Asn-183, and 213 to 215; these read RSAD and HVY. Asp-175 provides a ligand contact to (6R)-5,10-methylene-5,6,7,8-tetrahydrofolate. Ala-267 is a binding site for (6R)-5,10-methylene-5,6,7,8-tetrahydrofolate.

It belongs to the thymidylate synthase family. Bacterial-type ThyA subfamily. As to quaternary structure, homodimer.

The protein localises to the cytoplasm. It carries out the reaction dUMP + (6R)-5,10-methylene-5,6,7,8-tetrahydrofolate = 7,8-dihydrofolate + dTMP. Its pathway is pyrimidine metabolism; dTTP biosynthesis. Functionally, catalyzes the reductive methylation of 2'-deoxyuridine-5'-monophosphate (dUMP) to 2'-deoxythymidine-5'-monophosphate (dTMP) while utilizing 5,10-methylenetetrahydrofolate (mTHF) as the methyl donor and reductant in the reaction, yielding dihydrofolate (DHF) as a by-product. This enzymatic reaction provides an intracellular de novo source of dTMP, an essential precursor for DNA biosynthesis. This Kineococcus radiotolerans (strain ATCC BAA-149 / DSM 14245 / SRS30216) protein is Thymidylate synthase.